Reading from the N-terminus, the 90-residue chain is Small ribosomal subunit protein bS16 (90 aa).

It belongs to the bacterial ribosomal protein bS16 family.

The sequence is that of Small ribosomal subunit protein bS16 from Moorella thermoacetica (strain ATCC 39073 / JCM 9320).